Consider the following 336-residue polypeptide: MFLTLIAAIISFMVSAFTMPYFIKFYQLKKIGGQQMHEDVKQHLAKAGTPTMGGTVFLLVATAVSLLVSLFSIKNTQSLALISGILSIVVIYGIIGFLDDFLKIFKQINEGLTAKQKLALQLAGGLMFYFLHVSPSGISSINVFGYQLSLGIFYLFFVLFWVVGFSNAVNLTDGIDGLASISVVISLVTYGVIAYVQWQFDVLLLIGTMIGALLGFFCFNHKPAKVFMGDVGSLALGAMLAAISIALRQEWTLLIIGIVYVLETSSVMLQVFYFKYTKKKYGEGRRIFRMTPFHHHLELGGLSGKGKKWSEWQVDAFLWGVGSLASLLVLAILYVF.

10 helical membrane-spanning segments follow: residues leucine 3–isoleucine 23, glycine 53–isoleucine 73, serine 78–leucine 98, leucine 118–isoleucine 138, valine 143–valine 163, glycine 174–alanine 194, phenylalanine 200–asparagine 220, valine 226–alanine 246, leucine 254–phenylalanine 274, and alanine 316–phenylalanine 336.

The protein belongs to the glycosyltransferase 4 family. MraY subfamily. Requires Mg(2+) as cofactor.

Its subcellular location is the cell membrane. The enzyme catalyses UDP-N-acetyl-alpha-D-muramoyl-L-alanyl-gamma-D-glutamyl-L-lysyl-D-alanyl-D-alanine + di-trans,octa-cis-undecaprenyl phosphate = Mur2Ac(oyl-L-Ala-gamma-D-Glu-L-Lys-D-Ala-D-Ala)-di-trans,octa-cis-undecaprenyl diphosphate + UMP. It participates in cell wall biogenesis; peptidoglycan biosynthesis. Catalyzes the initial step of the lipid cycle reactions in the biosynthesis of the cell wall peptidoglycan: transfers peptidoglycan precursor phospho-MurNAc-pentapeptide from UDP-MurNAc-pentapeptide onto the lipid carrier undecaprenyl phosphate, yielding undecaprenyl-pyrophosphoryl-MurNAc-pentapeptide, known as lipid I. This Streptococcus pyogenes serotype M18 (strain MGAS8232) protein is Phospho-N-acetylmuramoyl-pentapeptide-transferase.